Here is a 342-residue protein sequence, read N- to C-terminus: RNA 3'-terminal phosphate cyclase (342 aa).

ATP is bound by residues glutamine 103 and 283–287; that span reads YLADQ. Histidine 308 acts as the Tele-AMP-histidine intermediate in catalysis.

It belongs to the RNA 3'-terminal cyclase family. Type 1 subfamily.

It localises to the cytoplasm. The enzyme catalyses a 3'-end 3'-phospho-ribonucleotide-RNA + ATP = a 3'-end 2',3'-cyclophospho-ribonucleotide-RNA + AMP + diphosphate. Catalyzes the conversion of 3'-phosphate to a 2',3'-cyclic phosphodiester at the end of RNA. The mechanism of action of the enzyme occurs in 3 steps: (A) adenylation of the enzyme by ATP; (B) transfer of adenylate to an RNA-N3'P to produce RNA-N3'PP5'A; (C) and attack of the adjacent 2'-hydroxyl on the 3'-phosphorus in the diester linkage to produce the cyclic end product. The biological role of this enzyme is unknown but it is likely to function in some aspects of cellular RNA processing. The chain is RNA 3'-terminal phosphate cyclase (rtcA) from Escherichia coli O157:H7.